We begin with the raw amino-acid sequence, 115 residues long: Ribosome-binding factor A (115 aa).

Belongs to the RbfA family. In terms of assembly, monomer. Binds 30S ribosomal subunits, but not 50S ribosomal subunits or 70S ribosomes.

Its subcellular location is the cytoplasm. Functionally, one of several proteins that assist in the late maturation steps of the functional core of the 30S ribosomal subunit. Associates with free 30S ribosomal subunits (but not with 30S subunits that are part of 70S ribosomes or polysomes). Required for efficient processing of 16S rRNA. May interact with the 5'-terminal helix region of 16S rRNA. This Bacillus velezensis (strain DSM 23117 / BGSC 10A6 / LMG 26770 / FZB42) (Bacillus amyloliquefaciens subsp. plantarum) protein is Ribosome-binding factor A.